A 406-amino-acid chain; its full sequence is Cysteine desulfurase (406 aa).

An N6-(pyridoxal phosphate)lysine modification is found at Lys-226. Residue Cys-364 is the Cysteine persulfide intermediate of the active site.

Belongs to the class-V pyridoxal-phosphate-dependent aminotransferase family. Csd subfamily. As to quaternary structure, homodimer. Interacts with SufE and the SufBCD complex composed of SufB, SufC and SufD. The interaction with SufE is required to mediate the direct transfer of the sulfur atom from the S-sulfanylcysteine. Pyridoxal 5'-phosphate serves as cofactor.

The protein resides in the cytoplasm. The enzyme catalyses (sulfur carrier)-H + L-cysteine = (sulfur carrier)-SH + L-alanine. It catalyses the reaction L-selenocysteine + AH2 = hydrogenselenide + L-alanine + A + H(+). The protein operates within cofactor biosynthesis; iron-sulfur cluster biosynthesis. Its function is as follows. Cysteine desulfurases mobilize the sulfur from L-cysteine to yield L-alanine, an essential step in sulfur metabolism for biosynthesis of a variety of sulfur-containing biomolecules. Component of the suf operon, which is activated and required under specific conditions such as oxidative stress and iron limitation. Acts as a potent selenocysteine lyase in vitro, that mobilizes selenium from L-selenocysteine. Selenocysteine lyase activity is however unsure in vivo. The polypeptide is Cysteine desulfurase (Klebsiella pneumoniae subsp. pneumoniae (strain ATCC 700721 / MGH 78578)).